The sequence spans 137 residues: Phospholipase A2 group V (137 aa).

The signal sequence occupies residues 1 to 20 (MKRLLTLAWFLACSVPAVPG). 6 disulfides stabilise this stretch: cysteine 46/cysteine 137, cysteine 48/cysteine 64, cysteine 63/cysteine 117, cysteine 70/cysteine 110, cysteine 79/cysteine 103, and cysteine 97/cysteine 108. Residues tyrosine 47, glycine 49, and glycine 51 each coordinate Ca(2+). The active site involves histidine 67. Aspartate 68 is a Ca(2+) binding site. Aspartate 111 is a catalytic residue.

The protein belongs to the phospholipase A2 family. It depends on Ca(2+) as a cofactor. This enzyme lacks one of the seven disulfide bonds found in similar PA2 proteins.

It localises to the secreted. The protein localises to the cell membrane. The protein resides in the cytoplasmic vesicle. It is found in the phagosome. Its subcellular location is the recycling endosome. It localises to the golgi apparatus. The protein localises to the cis-Golgi network. The protein resides in the trans-Golgi network. The enzyme catalyses a 1,2-diacyl-sn-glycero-3-phosphocholine + H2O = a 1-acyl-sn-glycero-3-phosphocholine + a fatty acid + H(+). The catalysed reaction is 1-hexadecanoyl-2-(9Z-octadecenoyl)-sn-glycero-3-phosphocholine + H2O = 1-hexadecanoyl-sn-glycero-3-phosphocholine + (9Z)-octadecenoate + H(+). It carries out the reaction 1-hexadecanoyl-2-(5Z,8Z,11Z,14Z-eicosatetraenoyl)-sn-glycero-3-phosphocholine + H2O = 1-hexadecanoyl-sn-glycero-3-phosphocholine + (5Z,8Z,11Z,14Z)-eicosatetraenoate + H(+). It catalyses the reaction 1-hexadecanoyl-2-(9Z,12Z-octadecadienoyl)-sn-glycero-3-phosphoethanolamine + H2O = 1-hexadecanoyl-sn-glycero-3-phosphoethanolamine + (9Z,12Z)-octadecadienoate + H(+). The enzyme catalyses 1-hexadecanoyl-2-(5Z,8Z,11Z,14Z-eicosatetraenoyl)-sn-glycero-3-phosphoethanolamine + H2O = 1-hexadecanoyl-sn-glycero-3-phosphoethanolamine + (5Z,8Z,11Z,14Z)-eicosatetraenoate + H(+). The catalysed reaction is 1-octadecanoyl-2-(5Z,8Z,11Z,14Z-eicosatetraenoyl)-sn-glycero-3-phospho-(1D-myo-inositol) + H2O = 1-octadecanoyl-sn-glycero-3-phospho-(1D-myo-inositol) + (5Z,8Z,11Z,14Z)-eicosatetraenoate + H(+). It carries out the reaction 1-hexadecanoyl-2-(9Z-octadecenoyl)-sn-glycero-3-phosphoglycerol + H2O = 1-hexadecanoyl-sn-glycero-3-phosphoglycerol + (9Z)-octadecenoate + H(+). It catalyses the reaction N-hexadecanoyl-1,2-di-(9Z-octadecenoyl)-sn-glycero-3-phosphoethanolamine + H2O = N-hexadecanoyl-1-(9Z-octadecenoyl)-sn-glycero-3-phosphoethanolamine + (9Z)-octadecenoate + H(+). The enzyme catalyses 1'-[1,2-di-(9Z-octadecenoyl)-sn-glycero-3-phospho]-3'-[1-(9Z-octadecenoyl)-sn-glycero-3-phospho]-glycerol + H2O = 1',3'-bis-[1-(9Z-octadecenoyl)-sn-glycero-3-phospho]-glycerol + (9Z)-octadecenoate + H(+). The catalysed reaction is 1',3'-bis[1,2-di-(9Z-octadecenoyl)-sn-glycero-3-phospho]-glycerol + H2O = 1'-[1,2-di-(9Z-octadecenoyl)-sn-glycero-3-phospho]-3'-[1-(9Z-octadecenoyl)-sn-glycero-3-phospho]-glycerol + (9Z)-octadecenoate + H(+). It functions in the pathway lipid metabolism; phospholipid metabolism. It participates in lipid metabolism; leukotriene B4 biosynthesis. Its pathway is lipid metabolism; leukotriene C4 biosynthesis. In terms of biological role, secretory calcium-dependent phospholipase A2 that primarily targets extracellular phospholipids. Hydrolyzes the ester bond of the fatty acyl group attached at sn-2 position of phospholipids (phospholipase A2 activity), preferentially releasing fatty acyl groups with a low degree of unsaturation such as oleoyl (C18:1) and linoleoyl (C18:2) groups. Hydrolyzes low-density lipoprotein (LDL) phospholipids releasing unsaturated fatty acids that drive macrophage polarization toward an M2 phenotype. May act in an autocrine and paracrine manner. Contributes to lipid remodeling of cellular membranes at different subcellular locations and generation of lipid mediators involved in pathogen clearance. Cleaves sn-2 fatty acyl chains of cardiolipin, a major component of the inner membrane of mitochondria and bacterial membranes. Promotes phagocytosis of bacteria in macrophages through production of lysophosphatidylethanolamines. Displays bactericidal activity against Gram-positive bacteria by directly hydrolyzing phospholipids of the bacterial membrane. Promotes phagocytosis and killing of ingested fungi likely through controlling phagosome-lysosome fusion and phagosome maturation. Plays a role in biosynthesis of cysteinyl leukotrienes (CysLTs) in myeloid cells. In eosinophils, triggers perinuclear arachidonate release and LTC4 synthesis in a PLA2G4A-independent way. In neutrophils, amplifies CysLTs biosynthesis initiated by PLA2G4A. Promotes immune complex clearance in macrophages via stimulating synthesis of CysLTs, which act through CYSLTR1 to trigger phagocytosis. May regulate antigen processing in antigen-presenting cells. In pulmonary macrophages regulates IL33 production required for activation of group 2 innate lymphoid cells. May play a role in the biosynthesis of N-acyl ethanolamines that regulate energy metabolism. Hydrolyzes N-acyl phosphatidylethanolamines to N-acyl lysophosphatidylethanolamines, which are further cleaved by a lysophospholipase D to release N-acyl ethanolamines. This chain is Phospholipase A2 group V (Pla2g5), found in Rattus norvegicus (Rat).